Consider the following 661-residue polypeptide: UvrABC system protein B (661 aa).

The Helicase ATP-binding domain occupies A25–R182. Residue G38–T45 coordinates ATP. Positions Y91–I114 match the Beta-hairpin motif. The 163-residue stretch at Q430 to I592 folds into the Helicase C-terminal domain. The region spanning K621 to A656 is the UVR domain.

Belongs to the UvrB family. In terms of assembly, forms a heterotetramer with UvrA during the search for lesions. Interacts with UvrC in an incision complex.

The protein resides in the cytoplasm. Its function is as follows. The UvrABC repair system catalyzes the recognition and processing of DNA lesions. A damage recognition complex composed of 2 UvrA and 2 UvrB subunits scans DNA for abnormalities. Upon binding of the UvrA(2)B(2) complex to a putative damaged site, the DNA wraps around one UvrB monomer. DNA wrap is dependent on ATP binding by UvrB and probably causes local melting of the DNA helix, facilitating insertion of UvrB beta-hairpin between the DNA strands. Then UvrB probes one DNA strand for the presence of a lesion. If a lesion is found the UvrA subunits dissociate and the UvrB-DNA preincision complex is formed. This complex is subsequently bound by UvrC and the second UvrB is released. If no lesion is found, the DNA wraps around the other UvrB subunit that will check the other stand for damage. This Rickettsia rickettsii (strain Sheila Smith) protein is UvrABC system protein B.